A 90-amino-acid chain; its full sequence is Small ribosomal subunit protein uS15c (90 aa).

It belongs to the universal ribosomal protein uS15 family. In terms of assembly, part of the 30S ribosomal subunit.

It is found in the plastid. Its subcellular location is the chloroplast. The protein is Small ribosomal subunit protein uS15c (rps15-A) of Hordeum vulgare (Barley).